Here is a 137-residue protein sequence, read N- to C-terminus: Small ribosomal subunit protein uS9c (137 aa).

This sequence belongs to the universal ribosomal protein uS9 family.

Its subcellular location is the plastid. The protein localises to the chloroplast. The protein is Small ribosomal subunit protein uS9c (rps9) of Mesostigma viride (Green alga).